The chain runs to 28 residues: Unknown protein from spot 154 of 2D-PAGE of etiolated coleoptile (28 aa).

In Zea mays (Maize), this protein is Unknown protein from spot 154 of 2D-PAGE of etiolated coleoptile.